We begin with the raw amino-acid sequence, 658 residues long: MSCSISLSFPDGSKRNYPAEMTGLELAESISKSLAKKAVAYSLDGITRDLSDSLGQSGQVEIITREDSRALELIRHDCAHVLAEAVQELFPETQVTIGPVIENGFYYDFARQQPFTLDDLTIIEKKMREIIQRNKPFRKEIWSREKARRVFSEKKEFYKVELINSIPDNQDLKIYYQGEWFDLCRGPHMQSTGQIGNAFKLMKVAGAYWRGDANNPMLTRIYGTAFANENDLKAYLHMLEEAEKRDHRRLGREMDLFHFQEEGPGMIFWHQKGWKMFQNLINYMRRRLDDHQYAEVNAPQVLDRSLWEISGHWGWYKENMFKAIPAAEDLDHEHIYALKPMNCPGHVQIFKHGLKSYRDLPIRLAEFGLVHRYEPSGSLHGLMRVRSFTQDDAHIFCTDEQLAAECLSINDLILSTYADFGFKEISLKLSTRPEKRVGSDALWDHAESIMESVLKTIETKFAGQIKTSILPGEGAFYGPKFEYTLKDAIGREWQCGTTQLDFNLPERFGAFYIDKDSEKRQPVMIHRAIFGSMERFLGILIENFAGHMPLWLAPEQIVVATITSEANEYAQKITARLKAVGLSATTDLRNEKINYKIREHSLQKVPVILVCGKREAETNSVNMRRLGSPNQTLLSVEDAIKQLSNESTPPDLQRVINA.

Positions 1-64 constitute a TGS domain; sequence MSCSISLSFP…GQSGQVEIIT (64 aa). Positions 246 to 549 are catalytic; it reads DHRRLGREMD…LIENFAGHMP (304 aa). Cysteine 343, histidine 394, and histidine 526 together coordinate Zn(2+).

It belongs to the class-II aminoacyl-tRNA synthetase family. In terms of assembly, homodimer. The cofactor is Zn(2+).

The protein resides in the cytoplasm. The catalysed reaction is tRNA(Thr) + L-threonine + ATP = L-threonyl-tRNA(Thr) + AMP + diphosphate + H(+). Its function is as follows. Catalyzes the attachment of threonine to tRNA(Thr) in a two-step reaction: L-threonine is first activated by ATP to form Thr-AMP and then transferred to the acceptor end of tRNA(Thr). Also edits incorrectly charged L-seryl-tRNA(Thr). In Bartonella tribocorum (strain CIP 105476 / IBS 506), this protein is Threonine--tRNA ligase.